A 438-amino-acid chain; its full sequence is Methylenetetrahydrofolate--tRNA-(uracil-5-)-methyltransferase TrmFO (438 aa).

9–14 (GAGLAG) serves as a coordination point for FAD.

The protein belongs to the MnmG family. TrmFO subfamily. Requires FAD as cofactor.

It localises to the cytoplasm. It catalyses the reaction uridine(54) in tRNA + (6R)-5,10-methylene-5,6,7,8-tetrahydrofolate + NADH + H(+) = 5-methyluridine(54) in tRNA + (6S)-5,6,7,8-tetrahydrofolate + NAD(+). The catalysed reaction is uridine(54) in tRNA + (6R)-5,10-methylene-5,6,7,8-tetrahydrofolate + NADPH + H(+) = 5-methyluridine(54) in tRNA + (6S)-5,6,7,8-tetrahydrofolate + NADP(+). In terms of biological role, catalyzes the folate-dependent formation of 5-methyl-uridine at position 54 (M-5-U54) in all tRNAs. The polypeptide is Methylenetetrahydrofolate--tRNA-(uracil-5-)-methyltransferase TrmFO (Lactobacillus acidophilus (strain ATCC 700396 / NCK56 / N2 / NCFM)).